A 263-amino-acid polypeptide reads, in one-letter code: Endonuclease 8 (263 aa).

Proline 2 (schiff-base intermediate with DNA) is an active-site residue. Glutamate 3 serves as the catalytic Proton donor. Lysine 53 acts as the Proton donor; for beta-elimination activity in catalysis. DNA contacts are provided by glutamine 70, arginine 125, and asparagine 169. Residues 229 to 263 form an FPG-type zinc finger; the sequence is KVFHRDGEACERCGGIIEKTTLSSRPFYWCPHCQK. Catalysis depends on arginine 253, which acts as the Proton donor; for delta-elimination activity.

It belongs to the FPG family. Zn(2+) is required as a cofactor.

The catalysed reaction is 2'-deoxyribonucleotide-(2'-deoxyribose 5'-phosphate)-2'-deoxyribonucleotide-DNA = a 3'-end 2'-deoxyribonucleotide-(2,3-dehydro-2,3-deoxyribose 5'-phosphate)-DNA + a 5'-end 5'-phospho-2'-deoxyribonucleoside-DNA + H(+). In terms of biological role, involved in base excision repair of DNA damaged by oxidation or by mutagenic agents. Acts as a DNA glycosylase that recognizes and removes damaged bases. Has a preference for oxidized pyrimidines, such as thymine glycol, 5,6-dihydrouracil and 5,6-dihydrothymine. Has AP (apurinic/apyrimidinic) lyase activity and introduces nicks in the DNA strand. Cleaves the DNA backbone by beta-delta elimination to generate a single-strand break at the site of the removed base with both 3'- and 5'-phosphates. The polypeptide is Endonuclease 8 (Salmonella enteritidis PT4 (strain P125109)).